The sequence spans 275 residues: NH(3)-dependent NAD(+) synthetase (275 aa).

50-57 (GISGGVDS) contributes to the ATP binding site. Asp-56 is a Mg(2+) binding site. Arg-147 is a binding site for deamido-NAD(+). Thr-167 contacts ATP. A Mg(2+)-binding site is contributed by Glu-172. Residues Lys-180 and Asp-187 each coordinate deamido-NAD(+). Residues Lys-196 and Thr-218 each coordinate ATP. A deamido-NAD(+)-binding site is contributed by 267–268 (HK).

Belongs to the NAD synthetase family. Homodimer.

It catalyses the reaction deamido-NAD(+) + NH4(+) + ATP = AMP + diphosphate + NAD(+) + H(+). Its pathway is cofactor biosynthesis; NAD(+) biosynthesis; NAD(+) from deamido-NAD(+) (ammonia route): step 1/1. Its function is as follows. Catalyzes the ATP-dependent amidation of deamido-NAD to form NAD. Uses ammonia as a nitrogen source. This is NH(3)-dependent NAD(+) synthetase from Pseudomonas aeruginosa (strain LESB58).